A 583-amino-acid chain; its full sequence is Extracellular serine/threonine protein kinase four-jointed (583 aa).

Residues 1–78 (MYDIKRLEAG…RRRSLQRRAC (78 aa)) are Cytoplasmic-facing. A helical; Signal-anchor for type II membrane protein membrane pass occupies residues 79–99 (LLSILAAFVFGMALGVVVPMF). The Extracellular segment spans residues 100–583 (GLPRHQDSPP…LGQVQKCQGS (484 aa)). Residues 179-222 (RTASGRYRKGPERRLSKKMPERVQPQETSRSPTTSPTNPTSEHQ) form a disordered region. The span at 187–199 (KGPERRLSKKMPE) shows a compositional bias: basic and acidic residues. A compositionally biased stretch (low complexity) spans 206–219 (TSRSPTTSPTNPTS). N-linked (GlcNAc...) asparagine glycans are attached at residues Asn310 and Asn379. The interval 384-421 (MQSERQAQSQPHGLLKRLGAASSPGSAHQSNAIEETGT) is disordered. Residue Asn491 is glycosylated (N-linked (GlcNAc...) asparagine).

It belongs to the FJX1/FJ family. In terms of processing, proteolytically cleaved to yield a secreted protein. As to expression, in the eye disk, expressed in a gradient ahead of the morphogenetic furrow, high at the equator and low at the poles of the eye. In the leg disk, expressed in concentric rings, possibly corresponding to segmental boundaries. In the wing disk, expression is localized in the wing pouch; low in peripheral regions and high towards the center.

Its subcellular location is the golgi apparatus membrane. It localises to the secreted. The enzyme catalyses L-seryl-[protein] + ATP = O-phospho-L-seryl-[protein] + ADP + H(+). The catalysed reaction is L-threonyl-[protein] + ATP = O-phospho-L-threonyl-[protein] + ADP + H(+). Golgi serine/threonine protein kinase required for intermediate growth in the proximal-distal axis. Phosphorylates specific residues within extracellular cadherin domains of Fat (ft) and Dachsous (ds) as they transit through the Golgi. Acts in ommatidial polarity determination as a secondary signal downstream of Notch, JAK/STAT and wingless. Also necessary for the initiation, up-regulation or maintenance of Notch ligand, Serrate (Ser) expression in legs, thereby participating in a feedback loop with N signaling. Sufficient for joint formation and growth in the leg. The sequence is that of Extracellular serine/threonine protein kinase four-jointed from Drosophila melanogaster (Fruit fly).